The sequence spans 385 residues: Tumor protein p53-inducible protein 13 (385 aa).

The N-terminal stretch at 1 to 27 is a signal peptide; sequence MVHPPPPPPRLLLVALVGLLSLREVVA. Residues 28–301 lie on the Extracellular side of the membrane; that stretch reads EPAEEAGTPC…ARGPTPRTEE (274 aa). The disordered stretch occupies residues 242–297; the sequence is APVSLTTGGPGGNGRSRTEAQMPSGQGNHGGCACPGQVSPAPRAAGPPRVARGPTP. Residues 281–297 show a composition bias toward low complexity; the sequence is PAPRAAGPPRVARGPTP. The helical transmembrane segment at 302–322 threads the bilayer; it reads AAWAAMALTFLLVLLTLATLC. Over 323–385 the chain is Cytoplasmic; sequence TRLHRNFRRS…DSGPDSESSD (63 aa). A compositionally biased stretch (basic residues) spans 359 to 369; sequence SRRIKRSRRRP. Residues 359 to 385 are disordered; that stretch reads SRRIKRSRRRPLLPPTPDSGPDSESSD.

The protein localises to the cell membrane. The protein resides in the cytoplasm. May act as a tumor suppressor. Inhibits tumor cell growth, when overexpressed. The polypeptide is Tumor protein p53-inducible protein 13 (Tp53i13) (Mus musculus (Mouse)).